A 291-amino-acid chain; its full sequence is Homoserine kinase (291 aa).

80 to 90 (RPSSGLGSSAA) serves as a coordination point for ATP.

The protein belongs to the GHMP kinase family. Homoserine kinase subfamily.

It is found in the cytoplasm. It carries out the reaction L-homoserine + ATP = O-phospho-L-homoserine + ADP + H(+). It functions in the pathway amino-acid biosynthesis; L-threonine biosynthesis; L-threonine from L-aspartate: step 4/5. In terms of biological role, catalyzes the ATP-dependent phosphorylation of L-homoserine to L-homoserine phosphate. The chain is Homoserine kinase from Haloquadratum walsbyi (strain DSM 16790 / HBSQ001).